The sequence spans 306 residues: MEGIKFADVLRSFEKKAEDDEYVSVERDYNERKVIENDVRRTELLGVDKRNRKVIKVLKRLLFVELDKIPIKYTQGMSEIASVFVLYYFQNIVEEEVAKGVLASGSDEESAEESAADGFSEQFIEAPEDENVELKRFVSRHKDTTAILGIVLTNVFRRKLEPLVVDDFKLYKENMRIFVEMMKKKGIRIPELESYKFMGSILTFFLRNLSRMEDVHKVFEIILSCPNTCPFLLLVLFYDKISNGKTIDSIVNNDLFPKVVKLEEEFVETKKRVESRSGFSRMRVMLVGGIASIVAAVVVYKITKKE.

Asn208 is a glycosylation site (N-linked (GlcNAc...) asparagine). The next 2 membrane-spanning stretches (helical) occupy residues 218 to 238 (VFEIILSCPNTCPFLLLVLFY) and 284 to 304 (VMLVGGIASIVAAVVVYKITK).

It is found in the membrane. This is an uncharacterized protein from Encephalitozoon cuniculi (strain GB-M1) (Microsporidian parasite).